Here is a 287-residue protein sequence, read N- to C-terminus: Putative sugar uptake protein EF_0928 (287 aa).

Transmembrane regions (helical) follow at residues 5-27, 32-49, 53-71, 84-106, 116-134, 155-177, 182-200, 207-229, 234-256, and 265-284; these read IALV…GGSA, LGMT…FFVI, LTTA…WSLG, VSVG…GAVF, FVVG…YLTA, IRAL…ATGL, IILP…FAFK, FVWM…LLTM, LAIS…IFLL, and MFYV…LLGY.

The protein belongs to the GRP transporter (TC 2.A.7.5) family.

The protein localises to the cell membrane. In Enterococcus faecalis (strain ATCC 700802 / V583), this protein is Putative sugar uptake protein EF_0928.